A 240-amino-acid chain; its full sequence is Phosphatidylserine decarboxylase proenzyme (240 aa).

The active-site Schiff-base intermediate with substrate; via pyruvic acid is the serine 198. Position 198 is a pyruvic acid (Ser); by autocatalysis (serine 198).

Belongs to the phosphatidylserine decarboxylase family. PSD-A subfamily. As to quaternary structure, heterodimer of a large membrane-associated beta subunit and a small pyruvoyl-containing alpha subunit. It depends on pyruvate as a cofactor. Is synthesized initially as an inactive proenzyme. Formation of the active enzyme involves a self-maturation process in which the active site pyruvoyl group is generated from an internal serine residue via an autocatalytic post-translational modification. Two non-identical subunits are generated from the proenzyme in this reaction, and the pyruvate is formed at the N-terminus of the alpha chain, which is derived from the carboxyl end of the proenzyme. The post-translation cleavage follows an unusual pathway, termed non-hydrolytic serinolysis, in which the side chain hydroxyl group of the serine supplies its oxygen atom to form the C-terminus of the beta chain, while the remainder of the serine residue undergoes an oxidative deamination to produce ammonia and the pyruvoyl prosthetic group on the alpha chain.

The protein localises to the cell membrane. The enzyme catalyses a 1,2-diacyl-sn-glycero-3-phospho-L-serine + H(+) = a 1,2-diacyl-sn-glycero-3-phosphoethanolamine + CO2. The protein operates within phospholipid metabolism; phosphatidylethanolamine biosynthesis; phosphatidylethanolamine from CDP-diacylglycerol: step 2/2. Functionally, catalyzes the formation of phosphatidylethanolamine (PtdEtn) from phosphatidylserine (PtdSer). The polypeptide is Phosphatidylserine decarboxylase proenzyme (Paramagnetospirillum magneticum (strain ATCC 700264 / AMB-1) (Magnetospirillum magneticum)).